The chain runs to 532 residues: Glycerophosphocholine permease GIT4 (532 aa).

The next 6 membrane-spanning stretches (helical) occupy residues Leu-55–Ile-75, Asn-98–Ser-118, Gly-126–Trp-146, Val-150–Ala-170, Ala-201–Phe-221, and Val-229–Leu-249. Residue Asn-266 is glycosylated (N-linked (GlcNAc...) asparagine). A helical transmembrane segment spans residues Trp-272–Ile-292. Asn-314 is a glycosylation site (N-linked (GlcNAc...) asparagine). Transmembrane regions (helical) follow at residues Trp-321–Ile-341, Leu-349–Leu-369, and His-375–Gly-395. Asn-396 carries an N-linked (GlcNAc...) asparagine glycan. 2 consecutive transmembrane segments (helical) span residues Gly-416–Ile-436 and Val-450–Val-470.

It belongs to the major facilitator superfamily. Sugar transporter (TC 2.A.1.1) family.

It localises to the cell membrane. It catalyses the reaction sn-glycerol 3-phosphocholine(out) = sn-glycerol 3-phosphocholine(in). Glycerophosphodiester transporter that mediates uptake of glycerophosphocholine (GroPCho) with GIT3. Does not possess detectable glycerophosphoinositol (GroPIns) transport activity. The expanded ability to utilize GroPIns and GroPCho results from the organism's pathogenic nature and its need to occupy a variety of environments within its host organism. This possibility is buttressed by the fact that GroPIns and GroPCho are present and abundant in human fluids. This chain is Glycerophosphocholine permease GIT4, found in Candida albicans (strain SC5314 / ATCC MYA-2876) (Yeast).